Here is a 38-residue protein sequence, read N- to C-terminus: Potassium channel toxin alpha-KTx 3.7 (38 aa).

3 disulfides stabilise this stretch: C8–C28, C14–C33, and C18–C35.

Belongs to the short scorpion toxin superfamily. Potassium channel inhibitor family. Alpha-KTx 03 subfamily. In terms of tissue distribution, expressed by the venom gland.

The protein resides in the secreted. Blocks voltage-gated potassium channels Kv1.1/KCNA1 (IC(50)=0.6 nM), Kv1.2/KCNA2 (IC(50)=5.4 nM), Kv1.3/KCNA3 (IC(50)=0.014 nM) potently, and moderately block intermediate conductance calcium-activated potassium channels KCa3.1/KCNN4 (IC(50)=225 nM). Also shows activity on muscle-type nicotinic acetylcholine receptor (nAChR), since it reversibly and dose-dependently inhibits acetylcholine-induced current through mouse muscle-type nAChR heterologously expressed in Xenopus oocytes (IC(50)=1.6 uM). This Orthochirus scrobiculosus (Central Asian scorpion) protein is Potassium channel toxin alpha-KTx 3.7.